Reading from the N-terminus, the 403-residue chain is Argininosuccinate synthase (403 aa).

Residues 12-20 (AYSGGLDTS) and alanine 39 contribute to the ATP site. 2 residues coordinate L-citrulline: tyrosine 90 and serine 95. An ATP-binding site is contributed by glycine 120. Residues threonine 122, asparagine 126, and aspartate 127 each contribute to the L-aspartate site. Asparagine 126 is an L-citrulline binding site. The L-citrulline site is built by arginine 130, serine 182, serine 191, glutamate 267, and tyrosine 279.

The protein belongs to the argininosuccinate synthase family. Type 1 subfamily. As to quaternary structure, homotetramer.

The protein resides in the cytoplasm. It carries out the reaction L-citrulline + L-aspartate + ATP = 2-(N(omega)-L-arginino)succinate + AMP + diphosphate + H(+). It participates in amino-acid biosynthesis; L-arginine biosynthesis; L-arginine from L-ornithine and carbamoyl phosphate: step 2/3. This Ruthia magnifica subsp. Calyptogena magnifica protein is Argininosuccinate synthase.